The sequence spans 487 residues: Cobyric acid synthase (487 aa).

Residues 248 to 435 form the GATase cobBQ-type domain; it reads VLKVIVPVLP…LHGLFEGSQS (188 aa). Cys-329 acts as the Nucleophile in catalysis. Residue His-427 is part of the active site.

Belongs to the CobB/CobQ family. CobQ subfamily.

It functions in the pathway cofactor biosynthesis; adenosylcobalamin biosynthesis. Functionally, catalyzes amidations at positions B, D, E, and G on adenosylcobyrinic A,C-diamide. NH(2) groups are provided by glutamine, and one molecule of ATP is hydrogenolyzed for each amidation. This is Cobyric acid synthase from Pseudomonas entomophila (strain L48).